Here is a 284-residue protein sequence, read N- to C-terminus: Phosphoenolpyruvate guanylyltransferase (284 aa).

Residues 94–123 (ADLSADEPAGTDAERRADPSAENRASTSAQ) form a disordered region. The segment covering 105–114 (DAERRADPSA) has biased composition (basic and acidic residues). Residues T203, G219, and S222 each coordinate phosphoenolpyruvate.

This sequence belongs to the CofC family.

It catalyses the reaction phosphoenolpyruvate + GTP + H(+) = enolpyruvoyl-2-diphospho-5'-guanosine + diphosphate. The protein operates within cofactor biosynthesis; coenzyme F420 biosynthesis. Functionally, guanylyltransferase that catalyzes the activation of phosphoenolpyruvate (PEP) as enolpyruvoyl-2-diphospho-5'-guanosine, via the condensation of PEP with GTP. It is involved in the biosynthesis of coenzyme F420, a hydride carrier cofactor. This chain is Phosphoenolpyruvate guanylyltransferase, found in Sanguibacter keddieii (strain ATCC 51767 / DSM 10542 / NCFB 3025 / ST-74).